A 256-amino-acid polypeptide reads, in one-letter code: Indole-3-glycerol phosphate synthase (256 aa).

It belongs to the TrpC family.

It carries out the reaction 1-(2-carboxyphenylamino)-1-deoxy-D-ribulose 5-phosphate + H(+) = (1S,2R)-1-C-(indol-3-yl)glycerol 3-phosphate + CO2 + H2O. Its pathway is amino-acid biosynthesis; L-tryptophan biosynthesis; L-tryptophan from chorismate: step 4/5. In Chlorobaculum tepidum (strain ATCC 49652 / DSM 12025 / NBRC 103806 / TLS) (Chlorobium tepidum), this protein is Indole-3-glycerol phosphate synthase.